A 393-amino-acid chain; its full sequence is Isocitrate dehydrogenase [NAD] subunit gamma, mitochondrial (393 aa).

Residues 1-39 (MALKVATVAGSAAKAVLGPALLCRPWEVLGAHEVPSRNI) constitute a mitochondrion transit peptide. 2 residues coordinate citrate: threonine 120 and asparagine 133. Arginine 136, arginine 167, and aspartate 254 together coordinate substrate. Aspartate 254 contributes to the Mn(2+) binding site. Residues asparagine 312, threonine 313, and asparagine 324 each coordinate ADP.

Belongs to the isocitrate and isopropylmalate dehydrogenases family. Heterooligomer of subunits alpha (IDH3A), beta (IDH3B), and gamma (IDH3G) in the apparent ratio of 2:1:1. The heterodimer containing one IDH3A and one IDH3B subunit and the heterodimer containing one IDH3A and one IDH3G subunit assemble into a heterotetramer (which contains two subunits of IDH3A, one of IDH3B and one of IDH3G) and further into the heterooctamer. Mg(2+) is required as a cofactor. It depends on Mn(2+) as a cofactor.

Its subcellular location is the mitochondrion. With respect to regulation, the heterotetramer and the heterodimer composed of IDH3A and IDH3G subunits can be allosterically activated by citrate (CIT) or/and ADP, and the two activators can act independently or synergistically. The heterodimer composed of IDH3A and IDH3B subunits cannot be allosterically regulated and the allosteric regulation of the heterotetramer is through the IDH3G subunit and not the IDH3B subunit. The IDH3G subunit contains the allosteric site which consists of a CIT-binding site and an ADP-binding site, and the binding of CIT and ADP causes conformational changes at the allosteric site which are transmitted to the active site in the catalytic subunit (IDH3A) through a cascade of conformational changes at the heterodimer interface, leading to stabilization of the isocitrate-binding at the active site and thus activation of the enzyme. ATP can activate the heterotetramer and the heterodimer composed of IDH3A and IDH3G subunits at low concentrations but inhibits their activities at high concentrations, whereas ATP exhibits only inhibitory effect on the heterodimer composed of IDH3A and IDH3B subunits. In terms of biological role, regulatory subunit which plays a role in the allosteric regulation of the enzyme catalyzing the decarboxylation of isocitrate (ICT) into alpha-ketoglutarate. The heterodimer composed of the alpha (IDH3A) and beta (IDH3B) subunits and the heterodimer composed of the alpha (IDH3A) and gamma (IDH3G) subunits, have considerable basal activity but the full activity of the heterotetramer (containing two subunits of IDH3A, one of IDH3B and one of IDH3G) requires the assembly and cooperative function of both heterodimers. The chain is Isocitrate dehydrogenase [NAD] subunit gamma, mitochondrial (IDH3G) from Homo sapiens (Human).